Reading from the N-terminus, the 420-residue chain is tRNA(Ile)-lysidine synthase, chloroplastic (420 aa).

Ser63–Ser68 serves as a coordination point for ATP.

It belongs to the tRNA(Ile)-lysidine synthase family.

It is found in the plastid. The protein resides in the chloroplast. The catalysed reaction is cytidine(34) in tRNA(Ile2) + L-lysine + ATP = lysidine(34) in tRNA(Ile2) + AMP + diphosphate + H(+). In terms of biological role, ligates lysine onto the cytidine present at position 34 of the AUA codon-specific tRNA(Ile) that contains the anticodon CAU, in an ATP-dependent manner. Cytidine is converted to lysidine, thus changing the amino acid specificity of the tRNA from methionine to isoleucine. In Zygnema circumcarinatum (Green alga), this protein is tRNA(Ile)-lysidine synthase, chloroplastic.